The chain runs to 1760 residues: Cilia- and flagella-associated protein 44 (1760 aa).

5 WD repeats span residues 119–160 (GATK…MVLR), 163–202 (CHNT…TGLK), 213–251 (LEIS…CCFA), 276–315 (CHEG…VAEG), and 388–427 (FNGG…ELYK). Residues 1155-1165 (RQEEKLREQTA) are compositionally biased toward basic and acidic residues. Positions 1155–1224 (RQEEKLREQT…FGTAAARTRS (70 aa)) are disordered. Positions 1181 to 1190 (PATNTDTSGA) are enriched in polar residues. Residues 1194-1205 (ATRRSEGEDSRK) are compositionally biased toward basic and acidic residues. The stretch at 1348 to 1389 (YDEARNSRDRCLREMEELQRLVQDQTASIEKLQEANKVFRRE) forms a coiled coil. The interval 1420–1444 (HSDMSGNDDDITSDDDDDDDMGEDE) is disordered. The segment covering 1425-1444 (GNDDDITSDDDDDDDMGEDE) has biased composition (acidic residues).

It belongs to the CFAP44 family.

The protein localises to the cell projection. The protein resides in the cilium. Its subcellular location is the flagellum. It is found in the cytoplasm. It localises to the cytoskeleton. The protein localises to the flagellum axoneme. Functionally, flagellar protein involved in flagellum axoneme organization and function. This is Cilia- and flagella-associated protein 44 from Trypanosoma brucei brucei (strain 927/4 GUTat10.1).